Consider the following 251-residue polypeptide: Ribonuclease PH (251 aa).

Residues R87 and 125-127 each bind phosphate; that span reads GTR.

Belongs to the RNase PH family. In terms of assembly, homohexameric ring arranged as a trimer of dimers.

It carries out the reaction tRNA(n+1) + phosphate = tRNA(n) + a ribonucleoside 5'-diphosphate. Functionally, phosphorolytic 3'-5' exoribonuclease that plays an important role in tRNA 3'-end maturation. Removes nucleotide residues following the 3'-CCA terminus of tRNAs; can also add nucleotides to the ends of RNA molecules by using nucleoside diphosphates as substrates, but this may not be physiologically important. Probably plays a role in initiation of 16S rRNA degradation (leading to ribosome degradation) during starvation. The polypeptide is Ribonuclease PH (Saccharopolyspora erythraea (strain ATCC 11635 / DSM 40517 / JCM 4748 / NBRC 13426 / NCIMB 8594 / NRRL 2338)).